We begin with the raw amino-acid sequence, 670 residues long: DNA ligase (670 aa).

NAD(+)-binding positions include D33–D37, S82–L83, and E114. K116 serves as the catalytic N6-AMP-lysine intermediate. NAD(+) is bound by residues R137, E174, K291, and K315. C409, C412, C427, and C433 together coordinate Zn(2+). A BRCT domain is found at G593–N670.

It belongs to the NAD-dependent DNA ligase family. LigA subfamily. Mg(2+) is required as a cofactor. It depends on Mn(2+) as a cofactor.

The catalysed reaction is NAD(+) + (deoxyribonucleotide)n-3'-hydroxyl + 5'-phospho-(deoxyribonucleotide)m = (deoxyribonucleotide)n+m + AMP + beta-nicotinamide D-nucleotide.. Functionally, DNA ligase that catalyzes the formation of phosphodiester linkages between 5'-phosphoryl and 3'-hydroxyl groups in double-stranded DNA using NAD as a coenzyme and as the energy source for the reaction. It is essential for DNA replication and repair of damaged DNA. This is DNA ligase from Vibrio parahaemolyticus serotype O3:K6 (strain RIMD 2210633).